The chain runs to 879 residues: Pyruvate dehydrogenase phosphatase regulatory subunit, mitochondrial (879 aa).

A mitochondrion-targeting transit peptide spans 1 to 27 (MMFYRLLSIVGRQRASPGWQNWSSARN).

This sequence belongs to the GcvT family. Heterodimer of a catalytic (PDP1) and a regulatory (PDPR) subunit.

The protein localises to the mitochondrion matrix. Its function is as follows. Decreases the sensitivity of PDP1 to magnesium ions, and this inhibition is reversed by the polyamine spermine. The protein is Pyruvate dehydrogenase phosphatase regulatory subunit, mitochondrial (PDPR) of Homo sapiens (Human).